Here is a 373-residue protein sequence, read N- to C-terminus: Chorismate synthase (373 aa).

Position 46 (arginine 46) interacts with NADP(+). Residues 123–125 (RSS), 250–251 (NA), glycine 295, 310–314 (KPTPS), and arginine 337 contribute to the FMN site.

It belongs to the chorismate synthase family. FMNH2 is required as a cofactor.

The catalysed reaction is 5-O-(1-carboxyvinyl)-3-phosphoshikimate = chorismate + phosphate. Its pathway is metabolic intermediate biosynthesis; chorismate biosynthesis; chorismate from D-erythrose 4-phosphate and phosphoenolpyruvate: step 7/7. Functionally, catalyzes the anti-1,4-elimination of the C-3 phosphate and the C-6 proR hydrogen from 5-enolpyruvylshikimate-3-phosphate (EPSP) to yield chorismate, which is the branch point compound that serves as the starting substrate for the three terminal pathways of aromatic amino acid biosynthesis. This reaction introduces a second double bond into the aromatic ring system. This Methanococcus aeolicus (strain ATCC BAA-1280 / DSM 17508 / OCM 812 / Nankai-3) protein is Chorismate synthase.